The sequence spans 109 residues: Phosphoribosyl-ATP pyrophosphatase (109 aa).

It belongs to the PRA-PH family.

Its subcellular location is the cytoplasm. The enzyme catalyses 1-(5-phospho-beta-D-ribosyl)-ATP + H2O = 1-(5-phospho-beta-D-ribosyl)-5'-AMP + diphosphate + H(+). It participates in amino-acid biosynthesis; L-histidine biosynthesis; L-histidine from 5-phospho-alpha-D-ribose 1-diphosphate: step 2/9. The chain is Phosphoribosyl-ATP pyrophosphatase from Sphingopyxis alaskensis (strain DSM 13593 / LMG 18877 / RB2256) (Sphingomonas alaskensis).